The following is a 210-amino-acid chain: FMN-dependent NADH:quinone oxidoreductase (210 aa).

Residues 17-19 and 148-151 contribute to the FMN site; these read SCS and SSGG.

This sequence belongs to the azoreductase type 1 family. Homodimer. It depends on FMN as a cofactor.

It catalyses the reaction 2 a quinone + NADH + H(+) = 2 a 1,4-benzosemiquinone + NAD(+). The enzyme catalyses N,N-dimethyl-1,4-phenylenediamine + anthranilate + 2 NAD(+) = 2-(4-dimethylaminophenyl)diazenylbenzoate + 2 NADH + 2 H(+). Functionally, quinone reductase that provides resistance to thiol-specific stress caused by electrophilic quinones. Also exhibits azoreductase activity. Catalyzes the reductive cleavage of the azo bond in aromatic azo compounds to the corresponding amines. The chain is FMN-dependent NADH:quinone oxidoreductase from Geotalea uraniireducens (strain Rf4) (Geobacter uraniireducens).